The primary structure comprises 119 residues: MATDTTEVKAIARFIRMSPYKVRRVLDQIRGLSYREALIILEFMPYRATEPVLTLLRSAAANAEHNAGLDRAELVITQAYADQGPVLKRFQPRAQGRAYQIRKPTCHITLAVAANAGAK.

It belongs to the universal ribosomal protein uL22 family. In terms of assembly, part of the 50S ribosomal subunit.

This protein binds specifically to 23S rRNA; its binding is stimulated by other ribosomal proteins, e.g. L4, L17, and L20. It is important during the early stages of 50S assembly. It makes multiple contacts with different domains of the 23S rRNA in the assembled 50S subunit and ribosome. In terms of biological role, the globular domain of the protein is located near the polypeptide exit tunnel on the outside of the subunit, while an extended beta-hairpin is found that lines the wall of the exit tunnel in the center of the 70S ribosome. This chain is Large ribosomal subunit protein uL22, found in Trichormus variabilis (strain ATCC 29413 / PCC 7937) (Anabaena variabilis).